The chain runs to 209 residues: Uracil phosphoribosyltransferase (209 aa).

5-phospho-alpha-D-ribose 1-diphosphate is bound by residues Arg-79, Arg-104, and 131-139 (DPMLATGGS). Residues Ile-194 and 199 to 201 (GDA) contribute to the uracil site. 5-phospho-alpha-D-ribose 1-diphosphate is bound at residue Asp-200.

It belongs to the UPRTase family. The cofactor is Mg(2+).

The catalysed reaction is UMP + diphosphate = 5-phospho-alpha-D-ribose 1-diphosphate + uracil. Its pathway is pyrimidine metabolism; UMP biosynthesis via salvage pathway; UMP from uracil: step 1/1. Its activity is regulated as follows. Allosterically activated by GTP. Its function is as follows. Catalyzes the conversion of uracil and 5-phospho-alpha-D-ribose 1-diphosphate (PRPP) to UMP and diphosphate. The chain is Uracil phosphoribosyltransferase from Agathobacter rectalis (strain ATCC 33656 / DSM 3377 / JCM 17463 / KCTC 5835 / VPI 0990) (Eubacterium rectale).